The sequence spans 358 residues: DNA replication and repair protein RecF (358 aa).

30–37 (GNNGSGKT) serves as a coordination point for ATP.

This sequence belongs to the RecF family.

It localises to the cytoplasm. Functionally, the RecF protein is involved in DNA metabolism; it is required for DNA replication and normal SOS inducibility. RecF binds preferentially to single-stranded, linear DNA. It also seems to bind ATP. The sequence is that of DNA replication and repair protein RecF from Histophilus somni (strain 129Pt) (Haemophilus somnus).